The sequence spans 148 residues: 3-dehydroquinate dehydratase (148 aa).

Tyr23 (proton acceptor) is an active-site residue. Residues Asn75, His81, and Asp88 each contribute to the substrate site. His101 (proton donor) is an active-site residue. Substrate-binding positions include 102 to 103 (LS) and Arg112.

It belongs to the type-II 3-dehydroquinase family. Homododecamer.

The catalysed reaction is 3-dehydroquinate = 3-dehydroshikimate + H2O. It participates in metabolic intermediate biosynthesis; chorismate biosynthesis; chorismate from D-erythrose 4-phosphate and phosphoenolpyruvate: step 3/7. Catalyzes a trans-dehydration via an enolate intermediate. In Xanthomonas campestris pv. campestris (strain 8004), this protein is 3-dehydroquinate dehydratase.